A 258-amino-acid chain; its full sequence is Aspartate/glutamate leucyltransferase (258 aa).

Belongs to the R-transferase family. Bpt subfamily.

The protein resides in the cytoplasm. The enzyme catalyses N-terminal L-glutamyl-[protein] + L-leucyl-tRNA(Leu) = N-terminal L-leucyl-L-glutamyl-[protein] + tRNA(Leu) + H(+). It carries out the reaction N-terminal L-aspartyl-[protein] + L-leucyl-tRNA(Leu) = N-terminal L-leucyl-L-aspartyl-[protein] + tRNA(Leu) + H(+). Its function is as follows. Functions in the N-end rule pathway of protein degradation where it conjugates Leu from its aminoacyl-tRNA to the N-termini of proteins containing an N-terminal aspartate or glutamate. This is Aspartate/glutamate leucyltransferase from Bradyrhizobium sp. (strain ORS 278).